Consider the following 147-residue polypeptide: Small ribosomal subunit protein uS5 (147 aa).

In terms of domain architecture, S5 DRBM spans 9-72 (FEEVVVNISR…DNAFKNITTV (64 aa)).

It belongs to the universal ribosomal protein uS5 family. Part of the 30S ribosomal subunit. Contacts proteins S4 and S8.

With S4 and S12 plays an important role in translational accuracy. In terms of biological role, located at the back of the 30S subunit body where it stabilizes the conformation of the head with respect to the body. The chain is Small ribosomal subunit protein uS5 from Nitratiruptor sp. (strain SB155-2).